A 61-amino-acid polypeptide reads, in one-letter code: [Val1,Thr6]-bradykinyl-Val,Asp (61 aa).

Residues 1–22 (MAFLKKSLFLVLFLGVVSLSFC) form the signal peptide. The propeptide occupies 23–48 (EEEEREEHEEEKREAEAAESAENLIS). The segment at 27–61 (REEHEEEKREAEAAESAENLISKRVPPGFTPFRVD) is disordered.

In terms of tissue distribution, expressed by the skin glands. Expression levels in inguinal glands and granular glands are virtually the same.

It localises to the secreted. In terms of biological role, induces contraction of rat ileum smooth muscle (EC(50)=2.73 uM) but has no activity towards rat smooth muscle from tail artery, urinary bladder or uterus. Binds to both bradykinin receptor B1 (BDKRB1) and B2 (BDKRB2); the effect via BDKRB1 is stronger. This Physalaemus nattereri (Cuyaba dwarf frog) protein is [Val1,Thr6]-bradykinyl-Val,Asp.